Here is a 463-residue protein sequence, read N- to C-terminus: MSTPEFKVIIVGGSLAGLTLAHCLLRAGISHIVLERRSVIAPEEGASIGILPNGARVLDQLGIYEHIQDTTEPLSTAHIRYPDGFYFSSRYPEIIKERFGYPIAFLPRRRLLEILYTSYPDHSNIYTNKNVIKVQSHDNQVSVLTEDGNTYRGDLVVGADGVNSRVLSEIWKLAGNPSLTKREGRGRTIEYACVFGISSPISDLKPGEQVNAFYDGLTIVTIHGRNGEIFWFFIKKLSRRYIYPDLIRLQQKDAEGICEEAKSLTVWKGVTFGDIWERRETASLTVLDEFLHHTWSWDRSVCVGDSIHKMTPNFGQGANTAIEDSAALANLLHSLIKEKRAEKPTDSDISLLLRQFKSQRLRRVQKIYKMSRFVTRLQARDGLLNTLLGRHYAPYAADLPAKIASGCIAGAEVLDYLPLPKVTGAGWNRGHRRSTMYILLGFTGVFTSALAMVVLLHIRDIAS.

Residues 5-25 (EFKVIIVGGSLAGLTLAHCLL) traverse the membrane as a helical segment. Glu35, Gly49, Arg108, Asp305, and Ala318 together coordinate FAD. The chain crosses the membrane as a helical span at residues 438–458 (ILLGFTGVFTSALAMVVLLHI).

The protein belongs to the paxM FAD-dependent monooxygenase family. FAD is required as a cofactor.

The protein resides in the membrane. It functions in the pathway secondary metabolite biosynthesis. Functionally, FAD-dependent monooxygenase; part of the gene cluster that mediates the biosynthesis of the indole diterpenes nodulisporic acids (NA). Nodulisporic acid A (NAA) and its chemically modified derivatives are of particular significance because of their highly potent insecticidal activity against blood-feeding arthropods and lack of observable adverse effects on mammals, in particular the tremogenicity associated with the paspaline-derived IDTs is not observed. The geranylgeranyl diphosphate (GGPP) synthase ggs1, localized outside of the cluster, is proposed to catalyze the first step in nodulisporic acid biosynthesis via conversion of farnesyl pyrophosphate and isopentyl pyrophosphate into geranylgeranyl pyrophosphate (GGPP). Condensation of indole-3-glycerol phosphate with GGPP by the prenyl transferase nodC then forms 3-geranylgeranylindole (3-GGI). Epoxidation by the FAD-dependent monooxygenase nodM leads to a single-epoxidized-GGI that is substrate of the terpene cyclase nodB for cyclization to yield emindole SB. The terminal methyl carbon, C28, of emindole SB is then oxidized by the cytochrome P450 monooxygenase nodW to produce nodulisporic acid F (NAF), the pentacyclic core of NAA. NAF is converted to nodulisporic acid E (NAE) via prenylation. This step is probably performed by one of the indole diterpene prenyltransferases nodD1 or nodD2. Several oxidation steps performed by the FAD-linked oxidoreductase nodO and one of the cytochrome P450 monooxygenase nodR, nodX or nodZ further convert NAE to nodulisporic acid D (NAD). NAD is substrate of cytochrome P450 monooxygenase nodJ to produce the precursor of nodulisporic acid C (NAC), converted to NAC by one of the indole diterpene prenyltransferases nodD1 or nodD2. The FAD-dependent monooxygenase nodY2 then oxidizes NAC to nodulisporic acid B (NAB). Finally NAB is converted to NAA by one of the cytochrome P450 monooxygenases nodR, nodX or nodZ. The sequence is that of FAD-dependent monooxygenase nodM from Hypoxylon pulicicidum.